A 408-amino-acid chain; its full sequence is GTPase Obg (408 aa).

The Obg domain occupies 1 to 159; sequence MKFVDEVSIR…RDLKMEMKVL (159 aa). The tract at residues 127 to 150 is disordered; it reads NTRFKSSTNRAPRQTTPGKPGDQR. Over residues 129–143 the composition is skewed to polar residues; the sequence is RFKSSTNRAPRQTTP. The 174-residue stretch at 160 to 333 folds into the OBG-type G domain; the sequence is ADVGLLGLPN…LSHDLMRYLE (174 aa). Residues 166-173, 191-195, 213-216, 283-286, and 314-316 each bind GTP; these read GLPNAGKS, FTTLV, DIPG, NKSD, and SAI. 2 residues coordinate Mg(2+): Ser173 and Thr193. The tract at residues 382–408 is disordered; it reads HDIGDDDGWDDDFEDDEDGPEIIYVRD. Residues 385-401 show a composition bias toward acidic residues; sequence GDDDGWDDDFEDDEDGP.

Belongs to the TRAFAC class OBG-HflX-like GTPase superfamily. OBG GTPase family. In terms of assembly, monomer. Mg(2+) is required as a cofactor.

It localises to the cytoplasm. In terms of biological role, an essential GTPase which binds GTP, GDP and possibly (p)ppGpp with moderate affinity, with high nucleotide exchange rates and a fairly low GTP hydrolysis rate. Plays a role in control of the cell cycle, stress response, ribosome biogenesis and in those bacteria that undergo differentiation, in morphogenesis control. The polypeptide is GTPase Obg (Pseudomonas putida (strain GB-1)).